The sequence spans 366 residues: HTH-type transcriptional regulator MSMEG_6044/MSMEI_5883 (366 aa).

The HTH lacI-type domain maps to 11–66; the sequence is ATLASLAAELKVSRTTISNAYNRPDQLSADLRERIFDAAKRLGYPGPDPVARSLRT. A DNA-binding region (H-T-H motif) is located at residues 13–32; it reads LASLAAELKVSRTTISNAYN.

Its function is as follows. Transcriptional regulator that negatively regulates transcription of the mce4 operon, which is involved in cholesterol transport and utilization. Acts by binding to the promoter region of the mce4 operon. This is HTH-type transcriptional regulator MSMEG_6044/MSMEI_5883 from Mycolicibacterium smegmatis (strain ATCC 700084 / mc(2)155) (Mycobacterium smegmatis).